The chain runs to 69 residues: U-Asilidin(12)-Dg3b (69 aa).

The N-terminal stretch at 1–19 (MRFLNIFLFFAVMIAFVSA) is a signal peptide. The propeptide occupies 20–33 (SPVLEEEEIDIEPR). Intrachain disulfides connect C36–C59, C45–C65, and C49–C67.

The protein belongs to the asilidin-12 family. As to expression, expressed by the venom gland.

It is found in the secreted. In terms of biological role, the recombinant peptide moderately increases Kv11.1/KCNH2/ERG1 currents and shifts the voltage-dependence of the channel activation to hyperpolarised potentials. In vivo, induces neurotoxic effects when injected into insects (tested on L.cuprina and A.domesticus). The polypeptide is U-Asilidin(12)-Dg3b (Dolopus genitalis (Giant Australian assassin fly)).